Consider the following 351-residue polypeptide: Photosystem II D2 protein (351 aa).

A helical membrane pass occupies residues 39 to 59 (TAYLAVGGWFTGTTFVTSWYT). His116 is a binding site for chlorophyll a. The chain crosses the membrane as a helical span at residues 123–139 (GFCLRQFEIARLVGIRP). Residues Gln128 and Asn141 each contribute to the pheophytin a site. Residues 151 to 164 (IFVSVFLLYPLGQA) traverse the membrane as a helical segment. His196 is a chlorophyll a binding site. The helical transmembrane segment at 206-226 (GALLCAIHGATVENTLFEDGD) threads the bilayer. A plastoquinone contacts are provided by His213 and Phe260. His213 is a Fe cation binding site. A Fe cation-binding site is contributed by His267. The helical transmembrane segment at 277-293 (GLWTSAIGIVGLALNLR) threads the bilayer.

It belongs to the reaction center PufL/M/PsbA/D family. In terms of assembly, PSII is composed of 1 copy each of membrane proteins PsbA, PsbB, PsbC, PsbD, PsbE, PsbF, PsbH, PsbI, PsbJ, PsbK, PsbL, PsbM, PsbT, PsbX, PsbY, PsbZ, Psb30/Ycf12, at least 3 peripheral proteins of the oxygen-evolving complex and a large number of cofactors. It forms dimeric complexes. The D1/D2 heterodimer binds P680, chlorophylls that are the primary electron donor of PSII, and subsequent electron acceptors. It shares a non-heme iron and each subunit binds pheophytin, quinone, additional chlorophylls, carotenoids and lipids. There is also a Cl(-1) ion associated with D1 and D2, which is required for oxygen evolution. The PSII complex binds additional chlorophylls, carotenoids and specific lipids. is required as a cofactor.

Its subcellular location is the plastid. It is found in the chloroplast thylakoid membrane. The enzyme catalyses 2 a plastoquinone + 4 hnu + 2 H2O = 2 a plastoquinol + O2. Functionally, photosystem II (PSII) is a light-driven water:plastoquinone oxidoreductase that uses light energy to abstract electrons from H(2)O, generating O(2) and a proton gradient subsequently used for ATP formation. It consists of a core antenna complex that captures photons, and an electron transfer chain that converts photonic excitation into a charge separation. The D1/D2 (PsbA/PsbD) reaction center heterodimer binds P680, the primary electron donor of PSII as well as several subsequent electron acceptors. D2 is needed for assembly of a stable PSII complex. The sequence is that of Photosystem II D2 protein from Heterosigma akashiwo (strain NIES-293 / 8280G21-1).